The sequence spans 394 residues: Nuclear hormone receptor family member nhr-103 (394 aa).

The nuclear receptor DNA-binding region spans 8 to 83; the sequence is SGPCEICGQK…VGMDSKKFQT (76 aa). The NR C4-type zinc-finger motif lies at 11 to 31; that stretch reads CEICGQKTSGRHFGVLSCRSC. The NR C4-type; degenerate zinc-finger motif lies at 47 to 66; that stretch reads QCVKGTCKIFEDGKFNCKQC. The 269-residue stretch at 126–394 folds into the NR LBD domain; it reads YLVDMAKNLL…FSHPEMFETT (269 aa).

This sequence belongs to the nuclear hormone receptor family.

It localises to the nucleus. Functionally, orphan nuclear receptor. In Caenorhabditis elegans, this protein is Nuclear hormone receptor family member nhr-103 (nhr-103).